Here is a 231-residue protein sequence, read N- to C-terminus: MPVKLATALSNNLFPALDSQLRAGRHIGIEELENHVFLMDFQEVLEEFYSRYNVELIRAPEGFFYLRPRSTTLIPRSVLSELDMMVGKILCYLYLSPERLAHEGIFSQQELYEELLSLADESKLLKLVNQRSTGSDLDRQKLQEKVRTSLNRLRRLGMIYFMGNDSSKFRITESVFRFGADVRSGDDAREAQLRMIRDGEAMPVEGSLSLKDDSDDNDRTDDTAPETGEDE.

Positions 195–231 are disordered; sequence MIRDGEAMPVEGSLSLKDDSDDNDRTDDTAPETGEDE. Residues 213–231 show a composition bias toward acidic residues; sequence DSDDNDRTDDTAPETGEDE.

Belongs to the MukE family. As to quaternary structure, interacts, and probably forms a ternary complex, with MukF and MukB. The complex formation is stimulated by calcium or magnesium.

It is found in the cytoplasm. The protein localises to the nucleoid. Its function is as follows. Involved in chromosome condensation, segregation and cell cycle progression. May participate in facilitating chromosome segregation by condensation DNA from both sides of a centrally located replisome during cell division. Probably acts via its interaction with MukB and MukF. The protein is Chromosome partition protein MukE of Pectobacterium atrosepticum (strain SCRI 1043 / ATCC BAA-672) (Erwinia carotovora subsp. atroseptica).